Here is a 316-residue protein sequence, read N- to C-terminus: tRNA dimethylallyltransferase (316 aa).

An ATP-binding site is contributed by 14-21; sequence GPTAVGKT. 16–21 lines the substrate pocket; the sequence is TAVGKT. An interaction with substrate tRNA region spans residues 39–42; it reads DSMQ.

Belongs to the IPP transferase family. As to quaternary structure, monomer. Requires Mg(2+) as cofactor.

It catalyses the reaction adenosine(37) in tRNA + dimethylallyl diphosphate = N(6)-dimethylallyladenosine(37) in tRNA + diphosphate. In terms of biological role, catalyzes the transfer of a dimethylallyl group onto the adenine at position 37 in tRNAs that read codons beginning with uridine, leading to the formation of N6-(dimethylallyl)adenosine (i(6)A). The chain is tRNA dimethylallyltransferase from Bacillus cytotoxicus (strain DSM 22905 / CIP 110041 / 391-98 / NVH 391-98).